Consider the following 265-residue polypeptide: Small ribosomal subunit protein uS2 (265 aa).

The interval 226–265 is disordered; the sequence is AAAPNSASVREEEFSAESADEGKGRRAPAKKGDKKADAAE. Residues 245–265 show a composition bias toward basic and acidic residues; that stretch reads DEGKGRRAPAKKGDKKADAAE.

The protein belongs to the universal ribosomal protein uS2 family.

This chain is Small ribosomal subunit protein uS2, found in Xanthomonas euvesicatoria pv. vesicatoria (strain 85-10) (Xanthomonas campestris pv. vesicatoria).